The primary structure comprises 477 residues: Trigger factor (477 aa).

In terms of domain architecture, PPIase FKBP-type spans 169–254 (EDRVTIDYLG…VKEVAKPNEL (86 aa)). The disordered stretch occupies residues 435–477 (VSKEELTAEDEDAASEAKPAKKAAAKKKAAPKKKAEEGKSEEA). The segment covering 454–466 (AKKAAAKKKAAPK) has biased composition (basic residues). The span at 467 to 477 (KKAEEGKSEEA) shows a compositional bias: basic and acidic residues.

Belongs to the FKBP-type PPIase family. Tig subfamily.

The protein localises to the cytoplasm. The enzyme catalyses [protein]-peptidylproline (omega=180) = [protein]-peptidylproline (omega=0). In terms of biological role, involved in protein export. Acts as a chaperone by maintaining the newly synthesized protein in an open conformation. Functions as a peptidyl-prolyl cis-trans isomerase. The protein is Trigger factor of Brucella suis biovar 1 (strain 1330).